The sequence spans 134 residues: DNA-binding protein inhibitor ID-2 (134 aa).

Ser14 and Ser25 each carry phosphoserine. Residues 23–75 (SRSKTPVDDPMSLLYNMNDCYSKLKELVPSIPQNKKVSKMEILQHVIDYILDL) form the bHLH domain. Residues 106–115 (LNTDISILSL) carry the Nuclear export signal motif.

As to quaternary structure, interacts with GATA4 and NKX2-5. Interacts with NR0B2. Interacts with CLOCK and BMAL1. Interacts with IFI204. Interacts with NEDD9/HEF1. Interacts with ASB4; this interaction promotes ID2 proteasomal degradation. Post-translationally, ubiquitinated in a ASB4-depedent manner, leading to proteasomal degradation. In terms of processing, phosphorylated in vitro by CDK1, PKA and PKC. In terms of tissue distribution, highly expressed in early fetal tissues, including those of the central nervous system.

Its subcellular location is the cytoplasm. The protein resides in the nucleus. Functionally, transcriptional regulator (lacking a basic DNA binding domain) which negatively regulates the basic helix-loop-helix (bHLH) transcription factors by forming heterodimers and inhibiting their DNA binding and transcriptional activity. Implicated in regulating a variety of cellular processes, including cellular growth, senescence, differentiation, apoptosis, angiogenesis, and neoplastic transformation. Inhibits skeletal muscle and cardiac myocyte differentiation. Regulates the circadian clock by repressing the transcriptional activator activity of the CLOCK-BMAL1 heterodimer. Restricts the CLOCK and BMAL1 localization to the cytoplasm. Plays a role in both the input and output pathways of the circadian clock: in the input component, is involved in modulating the magnitude of photic entrainment and in the output component, contributes to the regulation of a variety of liver clock-controlled genes involved in lipid metabolism. The chain is DNA-binding protein inhibitor ID-2 (ID2) from Homo sapiens (Human).